The chain runs to 219 residues: Small ribosomal subunit protein eS1 (219 aa).

It belongs to the eukaryotic ribosomal protein eS1 family. In terms of assembly, component of the small ribosomal subunit. Mature ribosomes consist of a small (40S) and a large (60S) subunit. The 40S subunit contains about 33 different proteins and 1 molecule of RNA (18S). The 60S subunit contains about 49 different proteins and 3 molecules of RNA (25S, 5.8S and 5S).

The protein resides in the cytoplasm. The chain is Small ribosomal subunit protein eS1 from Guillardia theta (Cryptophyte).